The sequence spans 214 residues: MAKQRPSSKRWLREHHNDPYVQQARREGYRSRAAYKLMELQEVVKEDGKSLLLIPVGANVVELGAAPGGWTQVAVKLAGVEGSVVGIDLLAMDPVPGAEILVGDFLDDAMLAQLQGLLHEGRVDVVLSDMAPNMCGVKSADQLRGEALAEAAFQFVEENLKTGGNFAVKLFNGPGFHDMVKQARAMFTVVKVVKPDSSRSRSPEHYLVGMGFKG.

The S-adenosyl-L-methionine site is built by Gly-68, Trp-70, Asp-88, Asp-104, and Asp-129. Lys-169 serves as the catalytic Proton acceptor.

Belongs to the class I-like SAM-binding methyltransferase superfamily. RNA methyltransferase RlmE family.

The protein localises to the cytoplasm. The enzyme catalyses uridine(2552) in 23S rRNA + S-adenosyl-L-methionine = 2'-O-methyluridine(2552) in 23S rRNA + S-adenosyl-L-homocysteine + H(+). Its function is as follows. Specifically methylates the uridine in position 2552 of 23S rRNA at the 2'-O position of the ribose in the fully assembled 50S ribosomal subunit. The chain is Ribosomal RNA large subunit methyltransferase E from Magnetococcus marinus (strain ATCC BAA-1437 / JCM 17883 / MC-1).